Reading from the N-terminus, the 397-residue chain is 4-hydroxybenzoate polyprenyltransferase, mitochondrial (397 aa).

A mitochondrion-targeting transit peptide spans 1 to 14; it reads MFAVRHLLKSRKHF. 9 helical membrane passes run 96–116, 121–141, 169–189, 190–210, 213–233, 242–262, 289–309, 313–333, and 345–365; these read IGTY…ADAG, LTML…GCTI, FDAI…LVQL, NWQS…YPLM, VTYW…LLGW, LAAC…YDTI, VWLS…GWAC, LPYY…IYSL, and FLSN…GTLL.

The protein belongs to the UbiA prenyltransferase family. The cofactor is Mg(2+).

It is found in the mitochondrion inner membrane. The catalysed reaction is an all-trans-polyprenyl diphosphate + 4-hydroxybenzoate = a 4-hydroxy-3-(all-trans-polyprenyl)benzoate + diphosphate. The protein operates within cofactor biosynthesis; ubiquinone biosynthesis. Functionally, catalyzes the prenylation of para-hydroxybenzoate (PHB) with an all-trans polyprenyl group. Mediates the second step in the final reaction sequence of coenzyme Q (CoQ) biosynthesis, which is the condensation of the polyisoprenoid side chain with PHB, generating the first membrane-bound Q intermediate. This is 4-hydroxybenzoate polyprenyltransferase, mitochondrial from Drosophila pseudoobscura pseudoobscura (Fruit fly).